The following is a 278-amino-acid chain: ATP synthase subunit delta (278 aa).

It belongs to the ATPase delta chain family. As to quaternary structure, F-type ATPases have 2 components, F(1) - the catalytic core - and F(0) - the membrane proton channel. F(1) has five subunits: alpha(3), beta(3), gamma(1), delta(1), epsilon(1). F(0) has three main subunits: a(1), b(2) and c(10-14). The alpha and beta chains form an alternating ring which encloses part of the gamma chain. F(1) is attached to F(0) by a central stalk formed by the gamma and epsilon chains, while a peripheral stalk is formed by the delta and b chains.

Its subcellular location is the cell membrane. In terms of biological role, f(1)F(0) ATP synthase produces ATP from ADP in the presence of a proton or sodium gradient. F-type ATPases consist of two structural domains, F(1) containing the extramembraneous catalytic core and F(0) containing the membrane proton channel, linked together by a central stalk and a peripheral stalk. During catalysis, ATP synthesis in the catalytic domain of F(1) is coupled via a rotary mechanism of the central stalk subunits to proton translocation. This protein is part of the stalk that links CF(0) to CF(1). It either transmits conformational changes from CF(0) to CF(1) or is implicated in proton conduction. The chain is ATP synthase subunit delta from Bifidobacterium longum (strain DJO10A).